Reading from the N-terminus, the 97-residue chain is Gibberellin-regulated protein 5 (97 aa).

Residues 1 to 27 (MANCIRRNALFFLTLLFLLSVSNLVQA) form the signal peptide.

Belongs to the GASA family. In terms of processing, six disulfide bonds may be present. Expressed in roots, root hairs, vasculature of cotyledons and hypocotyls, shoot apex, leaf veins, stems, flower receptacles, pollen, filaments, anthers and siliques.

The protein resides in the secreted. The protein localises to the cell wall. It is found in the extracellular space. It localises to the extracellular matrix. In terms of biological role, gibberellin-regulated protein that acts as a negative regulator of gibberellin-induced flowering and stem growth. May inhibit flowering and inflorescence growth via a pathway involving GAI and by enhancing FLC expression and repressing FT and LFY. Acts as a negative regulator in thermotolerance by resogulating both salicylic acid (SA) signaling and heat shock-protein accumulation. The protein is Gibberellin-regulated protein 5 (GASA5) of Arabidopsis thaliana (Mouse-ear cress).